The following is a 139-amino-acid chain: Chorion protein S16 (139 aa).

The N-terminal stretch at methionine 1–alanine 21 is a signal peptide.

Belongs to the chorion protein S16 family.

Its subcellular location is the secreted. In terms of biological role, chorion membrane (egg shell) protein; plays a role in protecting the egg from the environment. This Drosophila virilis (Fruit fly) protein is Chorion protein S16 (Cp16).